The primary structure comprises 141 residues: Hemoglobin subunit alpha-A (141 aa).

Positions Val-1–Arg-141 constitute a Globin domain. His-58 contacts O2. His-87 serves as a coordination point for heme b.

It belongs to the globin family. Heterotetramer of two alpha chains and two beta chains. In terms of tissue distribution, red blood cells.

Involved in oxygen transport from the lung to the various peripheral tissues. The sequence is that of Hemoglobin subunit alpha-A (HBAA) from Phasianus colchicus colchicus (Black-necked pheasant).